Consider the following 707-residue polypeptide: B-cell lymphoma 6 protein homolog (707 aa).

In terms of domain architecture, BTB spans T32–E99. The segment at H275–S350 is disordered. Positions K299–L315 are enriched in basic and acidic residues. The segment covering S331–S350 has biased composition (polar residues). Residue S334 is modified to Phosphoserine. Residue S344 is modified to Phosphoserine; by MAPK1. Position 362 is a phosphoserine (S362). The tract at residues K377–K380 is required for interaction with NuRD complex and for transcriptional repressor activity. K380 carries the N6-acetyllysine; by EP300 modification. S405 carries the post-translational modification Phosphoserine. Residues S405–L469 form a disordered region. Pro residues predominate over residues Y409–E420. The span at D425–N452 shows a compositional bias: polar residues. Residues S458–S467 show a composition bias toward low complexity. 6 C2H2-type zinc fingers span residues F519–H542, Y547–H569, Y575–H597, Y603–H625, Y631–H653, and Y659–H682.

As to quaternary structure, homodimer. Interacts (via BTB domain) with the corepressors BCOR, NCOR1 and SMRT/NCOR2; the interactions are direct. Forms preferably ternary complexes with BCOR and SMRT/NCOR2 on target gene promoters but, on enhancer elements, interacts with SMRT/NCOR2 and HDAC3 to repress proximal gene expression. Interacts with histone deacetylases HDAC2, HDAC5 and HDAC9 (via the catalytic domain). Interacts with ZBTB7 and BCL6B. Interacts with SCF(FBXO11) complex; the interaction is independent of phosphorylation and promotes ubiquitination. Interacts (when phosphorylated) with PIN1; the interaction is required for BCL6 degradation upon genotoxic stress. Interacts with ZBTB17; inhibits ZBTB17 transcriptional activity. Interacts with CTBP1, autoinhibits its transcriptional expression. Interacts with NOTCH1 NCID and SIRT1; leads to a epigenetic repression of selective NOTCH1-target genes. Interacts (nor via BTB domain neither acetylated) with the NuRD complex components CHD4, HDAC1, MBD3 and MTA3; the interaction with MTA3 inhibits BCL6 acetylation and is required for BCL6 transpriptional repression. Post-translationally, phosphorylated by MAPK1 in response to antigen receptor activation at Ser-334 and Ser-344. Phosphorylated by ATM in response to genotoxic stress. Phosphorylation induces its degradation by ubiquitin/proteasome pathway. Polyubiquitinated. Polyubiquitinated by SCF(FBXO11), leading to its degradation by the proteasome. Ubiquitinated by the SCF(FBXL17) complex, leading to its degradation by the proteasome: ubiquitination by the SCF(FBXL17) complex takes place when aberrant BTB domain dimers are formed. In terms of processing, acetylated at Lys-380 by EP300 which inhibits the interaction with NuRD complex and the transcriptional repressor function. Deacetylated by HDAC- and SIR2-dependent pathways. In terms of tissue distribution, expressed at least in germinal center B-cells of spleen.

It is found in the nucleus. Transcriptional repressor mainly required for germinal center (GC) formation and antibody affinity maturation which has different mechanisms of action specific to the lineage and biological functions. Forms complexes with different corepressors and histone deacetylases to repress the transcriptional expression of different subsets of target genes. Represses its target genes by binding directly to the DNA sequence 5'-TTCCTAGAA-3' (BCL6-binding site) or indirectly by repressing the transcriptional activity of transcription factors. In GC B-cells, represses genes that function in differentiation, inflammation, apoptosis and cell cycle control, also autoregulates its transcriptional expression and up-regulates, indirectly, the expression of some genes important for GC reactions, such as AICDA, through the repression of microRNAs expression, like miR155. An important function is to allow GC B-cells to proliferate very rapidly in response to T-cell dependent antigens and tolerate the physiological DNA breaks required for immunglobulin class switch recombination and somatic hypermutation without inducing a p53/TP53-dependent apoptotic response. In follicular helper CD4(+) T-cells (T(FH) cells), promotes the expression of T(FH)-related genes but inhibits the differentiation of T(H)1, T(H)2 and T(H)17 cells. Also required for the establishment and maintenance of immunological memory for both T- and B-cells. Suppresses macrophage proliferation through competition with STAT5 for STAT-binding motifs binding on certain target genes, such as CCL2 and CCND2. In response to genotoxic stress, controls cell cycle arrest in GC B-cells in both p53/TP53-dependedent and -independent manners. Besides, also controls neurogenesis through the alteration of the composition of NOTCH-dependent transcriptional complexes at selective NOTCH targets, such as HES5, including the recruitment of the deacetylase SIRT1 and resulting in an epigenetic silencing leading to neuronal differentiation. The polypeptide is B-cell lymphoma 6 protein homolog (Bcl6) (Mus musculus (Mouse)).